The primary structure comprises 100 residues: ATP synthase subunit g 2, mitochondrial (100 aa).

It belongs to the ATPase g subunit family. As to quaternary structure, F-type ATPases have 2 components, CF(1) - the catalytic core - and CF(0) - the membrane proton channel. CF(0) seems to have nine subunits: a, b, c, d, e, f, g, F6 and 8 (or A6L).

The protein localises to the mitochondrion membrane. In terms of biological role, mitochondrial membrane ATP synthase (F(1)F(0) ATP synthase or Complex V) produces ATP from ADP in the presence of a proton gradient across the membrane which is generated by electron transport complexes of the respiratory chain. F-type ATPases consist of two structural domains, F(1) - containing the extramembraneous catalytic core, and F(0) - containing the membrane proton channel, linked together by a central stalk and a peripheral stalk. During catalysis, ATP synthesis in the catalytic domain of F(1) is coupled via a rotary mechanism of the central stalk subunits to proton translocation. Part of the complex F(0) domain. Minor subunit located with subunit a in the membrane. This is ATP synthase subunit g 2, mitochondrial from Homo sapiens (Human).